The following is a 1035-amino-acid chain: Ephrin type-A receptor 6 (1035 aa).

The first 22 residues, 1-22 (MGGCEVREFLLQFGFFLPLLTA), serve as a signal peptide directing secretion. The Extracellular portion of the chain corresponds to 23 to 549 (WTGDCSHVSN…MAAEQGQILV (527 aa)). Residues 33–211 (QVVLLDTTTV…FYKKCPFTVR (179 aa)) form the Eph LBD domain. 2 Fibronectin type-III domains span residues 330 to 440 (PPSA…TDHD) and 441 to 536 (APSL…TGDE). N-linked (GlcNAc...) asparagine glycans are attached at residues Asn-342, Asn-396, and Asn-409. Residues 550-570 (IATAAVGGFTLLVILTLFFLI) form a helical membrane-spanning segment. Residues 571–1035 (TGRCQWYIKA…MHIQEKGFHV (465 aa)) lie on the Cytoplasmic side of the membrane. Tyr-605 and Tyr-611 each carry phosphotyrosine; by autocatalysis. The Protein kinase domain maps to 630–943 (IRIERVIGAG…RNPSALHTLV (314 aa)). Residues 636-644 (IGAGEFGEV) and Lys-662 contribute to the ATP site. Asp-797 (proton acceptor) is an active-site residue. Phosphotyrosine; by autocatalysis occurs at positions 830 and 977. The SAM domain occupies 960 to 1024 (PLFVTVGDWL…VSSIQTLRLH (65 aa)). A PDZ-binding motif is present at residues 1033–1035 (FHV).

This sequence belongs to the protein kinase superfamily. Tyr protein kinase family. Ephrin receptor subfamily. In terms of assembly, heterotetramer upon binding of the ligand. The heterotetramer is composed of an ephrin dimer and a receptor dimer. Oligomerization is probably required to induce biological responses. Interacts (via SAM domain) with ANKS1A (via SAM domain).

Its subcellular location is the membrane. It catalyses the reaction L-tyrosyl-[protein] + ATP = O-phospho-L-tyrosyl-[protein] + ADP + H(+). Its function is as follows. Receptor tyrosine kinase which binds promiscuously GPI-anchored ephrin-A family ligands residing on adjacent cells, leading to contact-dependent bidirectional signaling into neighboring cells. The signaling pathway downstream of the receptor is referred to as forward signaling while the signaling pathway downstream of the ephrin ligand is referred to as reverse signaling. The chain is Ephrin type-A receptor 6 (Epha6) from Mus musculus (Mouse).